Here is a 596-residue protein sequence, read N- to C-terminus: Elongation factor 4 (596 aa).

Residues 2-184 (KHIRNFSIIA…MIVKDVPPPV (183 aa)) enclose the tr-type G domain. Residues 14–19 (DHGKST) and 131–134 (NKID) each bind GTP.

It belongs to the TRAFAC class translation factor GTPase superfamily. Classic translation factor GTPase family. LepA subfamily.

It is found in the cell inner membrane. The catalysed reaction is GTP + H2O = GDP + phosphate + H(+). In terms of biological role, required for accurate and efficient protein synthesis under certain stress conditions. May act as a fidelity factor of the translation reaction, by catalyzing a one-codon backward translocation of tRNAs on improperly translocated ribosomes. Back-translocation proceeds from a post-translocation (POST) complex to a pre-translocation (PRE) complex, thus giving elongation factor G a second chance to translocate the tRNAs correctly. Binds to ribosomes in a GTP-dependent manner. In Pseudoalteromonas translucida (strain TAC 125), this protein is Elongation factor 4.